The sequence spans 688 residues: Glycine--tRNA ligase beta subunit (688 aa).

Belongs to the class-II aminoacyl-tRNA synthetase family. In terms of assembly, tetramer of two alpha and two beta subunits.

The protein localises to the cytoplasm. The enzyme catalyses tRNA(Gly) + glycine + ATP = glycyl-tRNA(Gly) + AMP + diphosphate. This chain is Glycine--tRNA ligase beta subunit, found in Listeria monocytogenes serovar 1/2a (strain ATCC BAA-679 / EGD-e).